A 241-amino-acid chain; its full sequence is Major microneme antigen (241 aa).

The first 34 residues, 1 to 34 (MTLPIHFPRCVLYGMASAVWSILFLHILVGDTMS), serve as a signal peptide directing secretion. The propeptide occupies 35-103 (AADALSWSGG…ATGRGPSFVH (69 aa)). The span at 64 to 83 (GKELEQQHGGEEQQMQRDTK) shows a compositional bias: basic and acidic residues. The interval 64 to 90 (GKELEQQHGGEEQQMQRDTKPAAFSNP) is disordered. PAN domains follow at residues 112 to 181 (CFPH…PRSC) and 185 to 241 (CTDN…VERA). Disulfide bonds link cysteine 112–cysteine 181, cysteine 137–cysteine 159, cysteine 141–cysteine 147, cysteine 185–cysteine 189, cysteine 210–cysteine 230, and cysteine 214–cysteine 220. Residue serine 121 participates in a carbohydrate binding. A carbohydrate contacts are provided by lysine 162, tyrosine 169, and aspartate 174.

This sequence belongs to the microneme antigen family. Homodimer or heterodimer of major microneme antigen and microneme antigen. Contains six disulfide bonds.

It is found in the cytoplasmic vesicle. Its subcellular location is the secretory vesicle. It localises to the microneme. Galactose-binding lectin. Plays a role in adhesion to the host cell. Has a potential role in invasion of host cells. This chain is Major microneme antigen, found in Sarcocystis muris.